Reading from the N-terminus, the 233-residue chain is Probable RNA 2'-phosphotransferase (233 aa).

It belongs to the KptA/TPT1 family.

In terms of biological role, removes the 2'-phosphate from RNA via an intermediate in which the phosphate is ADP-ribosylated by NAD followed by a presumed transesterification to release the RNA and generate ADP-ribose 1''-2''-cyclic phosphate (APPR&gt;P). May function as an ADP-ribosylase. The sequence is that of Probable RNA 2'-phosphotransferase from Hyperthermus butylicus (strain DSM 5456 / JCM 9403 / PLM1-5).